A 153-amino-acid chain; its full sequence is MAEQEFRHMVRITRKDVDGNSTIATALTEIRGIGKAFAIAICKVLDLDQDAQIGYIDDESVKQIEAVLENPQEFGIPEWFLNRRNDYETGETKHLIESDLNMTLRDDLNRMKMIRSYKGKRHEVGLPVRGQRTKSTFRHGSSVGVSRTRPTGN.

The interval 129-153 (RGQRTKSTFRHGSSVGVSRTRPTGN) is disordered. Polar residues predominate over residues 143 to 153 (VGVSRTRPTGN).

Belongs to the universal ribosomal protein uS13 family. Part of the 30S ribosomal subunit. Forms a loose heterodimer with protein S19. Forms two bridges to the 50S subunit in the 70S ribosome.

Its function is as follows. Located at the top of the head of the 30S subunit, it contacts several helices of the 16S rRNA. In the 70S ribosome it contacts the 23S rRNA (bridge B1a) and protein L5 of the 50S subunit (bridge B1b), connecting the 2 subunits; these bridges are implicated in subunit movement. The chain is Small ribosomal subunit protein uS13 from Methanosphaera stadtmanae (strain ATCC 43021 / DSM 3091 / JCM 11832 / MCB-3).